The following is a 156-amino-acid chain: Small ribosomal subunit protein uS7 (156 aa).

This sequence belongs to the universal ribosomal protein uS7 family. As to quaternary structure, part of the 30S ribosomal subunit. Contacts proteins S9 and S11.

Functionally, one of the primary rRNA binding proteins, it binds directly to 16S rRNA where it nucleates assembly of the head domain of the 30S subunit. Is located at the subunit interface close to the decoding center, probably blocks exit of the E-site tRNA. This is Small ribosomal subunit protein uS7 from Crocosphaera subtropica (strain ATCC 51142 / BH68) (Cyanothece sp. (strain ATCC 51142)).